The primary structure comprises 473 residues: PPE family protein PPE37 (473 aa).

The Iron-binding motif motif lies at 203 to 206; it reads DFLE. 2 consecutive transmembrane segments (helical) span residues 227–247 and 250–270; these read VLDW…AYLV and PLIY…PAGL.

The protein belongs to the mycobacterial PPE family.

The protein resides in the cell membrane. Its function is as follows. Essential for efficient heme-iron acquisition (HIA). Binds iron. Strains with a functional PPE37 can utilize low concentrations of hemin very efficiently in broth and on agar plates. During infection, might interfere with the pro-inflammatory cytokine response in infected macrophages. Functionally, in vitro, incubation of the protein in the presence of M.tuberculosis proteases leads to the cleavage of PPE37 into two segments, the N- and C-terminal segments. Transfection of human monocytic THP-1 cell lines with the N-terminal segment leads to the proliferation and differentiation of THP-1 cells into adherent stellate cells with dendritic cell-like morphology. Transfection of THP-1 cells with the C-terminal segment leads to the apoptosis of the cells. Recombinant protein antigens display strong B-cell response in tuberculosis patients and immunized mice. This Mycobacterium tuberculosis (strain ATCC 25618 / H37Rv) protein is PPE family protein PPE37.